A 196-amino-acid polypeptide reads, in one-letter code: Large ribosomal subunit protein mL66 (196 aa).

The N-terminal 34 residues, 1–34, are a transit peptide targeting the mitochondrion; it reads MAALNVLVSGCGRFLRGLLTGPTVTSWARPPARG.

The protein belongs to the bacterial ribosomal protein bS18 family. Mitochondrion-specific ribosomal protein mL66 subfamily. Component of the mitochondrial ribosome small subunit (28S) which comprises a 12S rRNA and about 30 distinct proteins.

It localises to the mitochondrion. The protein is Large ribosomal subunit protein mL66 (MRPS18A) of Bos taurus (Bovine).